The sequence spans 447 residues: Ribosomal protein uS12 methylthiotransferase RimO (447 aa).

The 111-residue stretch at 4 to 114 (PKVGFVSLGC…VMEAVHEYVP (111 aa)) folds into the MTTase N-terminal domain. Residues Cys13, Cys49, Cys78, Cys147, Cys151, and Cys154 each coordinate [4Fe-4S] cluster. The Radical SAM core domain maps to 133–370 (LTPKHYAYLK…MQVQQQISAA (238 aa)). One can recognise a TRAM domain in the interval 373–443 (QKRIGQTMTV…EYDLFAKLIK (71 aa)).

It belongs to the methylthiotransferase family. RimO subfamily. Requires [4Fe-4S] cluster as cofactor.

The protein localises to the cytoplasm. It catalyses the reaction L-aspartate(89)-[ribosomal protein uS12]-hydrogen + (sulfur carrier)-SH + AH2 + 2 S-adenosyl-L-methionine = 3-methylsulfanyl-L-aspartate(89)-[ribosomal protein uS12]-hydrogen + (sulfur carrier)-H + 5'-deoxyadenosine + L-methionine + A + S-adenosyl-L-homocysteine + 2 H(+). Functionally, catalyzes the methylthiolation of an aspartic acid residue of ribosomal protein uS12. The protein is Ribosomal protein uS12 methylthiotransferase RimO of Acinetobacter baumannii (strain AB307-0294).